A 464-amino-acid polypeptide reads, in one-letter code: Protein FAM90A18 (464 aa).

3 disordered regions span residues 1-42 (MMAR…DPRL), 70-387 (PATL…ASHD), and 415-437 (HSPE…SEAP). 2 stretches are compositionally biased toward basic and acidic residues: residues 74–89 (GKKE…KPRV) and 97–114 (NKDK…DPQR). Residues 180 to 197 (LASLSPLRKASLSSSSSL) show a composition bias toward low complexity.

The protein belongs to the FAM90 family.

The polypeptide is Protein FAM90A18 (Homo sapiens (Human)).